We begin with the raw amino-acid sequence, 452 residues long: Bifunctional purine biosynthesis protein PurH (452 aa).

Residues 1–115 (MKRILVSLYE…KNWKKVKPAF (115 aa)) enclose the MGS-like domain.

It belongs to the PurH family.

The enzyme catalyses (6R)-10-formyltetrahydrofolate + 5-amino-1-(5-phospho-beta-D-ribosyl)imidazole-4-carboxamide = 5-formamido-1-(5-phospho-D-ribosyl)imidazole-4-carboxamide + (6S)-5,6,7,8-tetrahydrofolate. The catalysed reaction is IMP + H2O = 5-formamido-1-(5-phospho-D-ribosyl)imidazole-4-carboxamide. It functions in the pathway purine metabolism; IMP biosynthesis via de novo pathway; 5-formamido-1-(5-phospho-D-ribosyl)imidazole-4-carboxamide from 5-amino-1-(5-phospho-D-ribosyl)imidazole-4-carboxamide (10-formyl THF route): step 1/1. Its pathway is purine metabolism; IMP biosynthesis via de novo pathway; IMP from 5-formamido-1-(5-phospho-D-ribosyl)imidazole-4-carboxamide: step 1/1. The polypeptide is Bifunctional purine biosynthesis protein PurH (Thermotoga maritima (strain ATCC 43589 / DSM 3109 / JCM 10099 / NBRC 100826 / MSB8)).